We begin with the raw amino-acid sequence, 769 residues long: Scarecrow-like protein 14 (769 aa).

Disordered regions lie at residues 1 to 23, 128 to 157, 279 to 320, and 364 to 388; these read MGSY…DFDL, PSSS…GAFS, TEKK…ERSN, and TAQS…DSKK. Residues 384–765 form the GRAS domain; it reads NDSKKETADL…RIVYASSLWV (382 aa). The segment at 391–451 is leucine repeat I (LRI); that stretch reads ADLRTLLVLC…EARLAGTGTQ (61 aa). The VHIID stretch occupies residues 470–536; it reads YQTYMSVCPF…GGSPKLRITG (67 aa). The VHIID signature appears at 501–505; sequence IHIID. Residues 552 to 584 form a leucine repeat II (LRII) region; it reads ETGHRLARYCQRHNVPFEYNAIAQKWETIQVED. The interval 593–687 is PFYRE; sequence VVVNSLFRFR…KEFYGREIVN (95 aa). Residues 690-765 form an SAW region; that stretch reads ACEGTERVER…RIVYASSLWV (76 aa).

Belongs to the GRAS family. As to expression, expressed in roots, shoots, flowers and siliques.

The protein localises to the nucleus. Its function is as follows. Probable transcription factor involved in plant development. The polypeptide is Scarecrow-like protein 14 (SCL14) (Arabidopsis thaliana (Mouse-ear cress)).